Consider the following 175-residue polypeptide: Isopentenyl-diphosphate Delta-isomerase (175 aa).

Positions 23 and 30 each coordinate Mn(2+). The Nudix hydrolase domain maps to 28–162 (TLHLAFCVFV…PLRYTPWFRR (135 aa)). Residue Cys-65 is part of the active site. His-67 serves as a coordination point for Mn(2+). Glu-85 lines the Mg(2+) pocket. Glu-111 and Glu-113 together coordinate Mn(2+). Glu-113 is a catalytic residue.

It belongs to the IPP isomerase type 1 family. Mg(2+) is required as a cofactor. Mn(2+) serves as cofactor.

It is found in the cytoplasm. It catalyses the reaction isopentenyl diphosphate = dimethylallyl diphosphate. It participates in isoprenoid biosynthesis; dimethylallyl diphosphate biosynthesis; dimethylallyl diphosphate from isopentenyl diphosphate: step 1/1. Functionally, catalyzes the 1,3-allylic rearrangement of the homoallylic substrate isopentenyl (IPP) to its highly electrophilic allylic isomer, dimethylallyl diphosphate (DMAPP). This Halorhodospira halophila (strain DSM 244 / SL1) (Ectothiorhodospira halophila (strain DSM 244 / SL1)) protein is Isopentenyl-diphosphate Delta-isomerase.